We begin with the raw amino-acid sequence, 145 residues long: D-aminoacyl-tRNA deacylase (145 aa).

The Gly-cisPro motif, important for rejection of L-amino acids signature appears at 137–138; sequence GP.

It belongs to the DTD family. In terms of assembly, homodimer.

It is found in the cytoplasm. The catalysed reaction is glycyl-tRNA(Ala) + H2O = tRNA(Ala) + glycine + H(+). It carries out the reaction a D-aminoacyl-tRNA + H2O = a tRNA + a D-alpha-amino acid + H(+). An aminoacyl-tRNA editing enzyme that deacylates mischarged D-aminoacyl-tRNAs. Also deacylates mischarged glycyl-tRNA(Ala), protecting cells against glycine mischarging by AlaRS. Acts via tRNA-based rather than protein-based catalysis; rejects L-amino acids rather than detecting D-amino acids in the active site. By recycling D-aminoacyl-tRNA to D-amino acids and free tRNA molecules, this enzyme counteracts the toxicity associated with the formation of D-aminoacyl-tRNA entities in vivo and helps enforce protein L-homochirality. This Shewanella sp. (strain MR-4) protein is D-aminoacyl-tRNA deacylase.